Reading from the N-terminus, the 484-residue chain is Adenylosuccinate lyase (484 aa).

Ala2 is subject to N-acetylalanine. Residues 20 to 21, 85 to 87, and 111 to 112 each bind substrate; these read RY, RHD, and TS. Lys147 is subject to N6-acetyllysine. His159 functions as the Proton donor/acceptor in the catalytic mechanism. Substrate is bound at residue Gln241. Ser289 (proton donor/acceptor) is an active-site residue. Residue Lys295 is modified to N6-acetyllysine. 4 residues coordinate substrate: Arg303, Arg329, Ser334, and Arg338. Lys415 is covalently cross-linked (Glycyl lysine isopeptide (Lys-Gly) (interchain with G-Cter in SUMO1)).

It belongs to the lyase 1 family. Adenylosuccinate lyase subfamily. Homotetramer. Residues from neighboring subunits contribute catalytic and substrate-binding residues to each active site.

It catalyses the reaction N(6)-(1,2-dicarboxyethyl)-AMP = fumarate + AMP. The catalysed reaction is (2S)-2-[5-amino-1-(5-phospho-beta-D-ribosyl)imidazole-4-carboxamido]succinate = 5-amino-1-(5-phospho-beta-D-ribosyl)imidazole-4-carboxamide + fumarate. It functions in the pathway purine metabolism; AMP biosynthesis via de novo pathway; AMP from IMP: step 2/2. It participates in purine metabolism; IMP biosynthesis via de novo pathway; 5-amino-1-(5-phospho-D-ribosyl)imidazole-4-carboxamide from 5-amino-1-(5-phospho-D-ribosyl)imidazole-4-carboxylate: step 2/2. Its function is as follows. Catalyzes two non-sequential steps in de novo AMP synthesis: converts (S)-2-(5-amino-1-(5-phospho-D-ribosyl)imidazole-4-carboxamido)succinate (SAICAR) to fumarate plus 5-amino-1-(5-phospho-D-ribosyl)imidazole-4-carboxamide, and thereby also contributes to de novo IMP synthesis, and converts succinyladenosine monophosphate (SAMP) to AMP and fumarate. In Mus musculus (Mouse), this protein is Adenylosuccinate lyase (Adsl).